Consider the following 147-residue polypeptide: Cysteine proteinase inhibitor 2 (147 aa).

Residues 1–27 (MATMLKVSLVLSLLGFLVIAVVTPSAA) form the signal peptide. Residues 87–117 (LQFSRVVSAQKQVVAGLKYYLRIEVTQPNGS) enclose the Cystatin domain. Positions 98–102 (QVVAG) match the Secondary area of contact motif. The N-linked (GlcNAc...) asparagine glycan is linked to Asn-115.

This sequence belongs to the cystatin family. Phytocystatin subfamily.

The protein resides in the secreted. Specific inhibitor of cysteine proteinases. Probably involved in the regulation of endogenous processes and in defense against pests and pathogens. The sequence is that of Cysteine proteinase inhibitor 2 (CYS2) from Arabidopsis thaliana (Mouse-ear cress).